The chain runs to 209 residues: Guanylate kinase (209 aa).

Positions 9–188 (GIMLVISSPS…SVYQIKCIFT (180 aa)) constitute a Guanylate kinase-like domain. Residue 16-23 (SPSGGGKT) coordinates ATP.

It belongs to the guanylate kinase family.

Its subcellular location is the cytoplasm. The enzyme catalyses GMP + ATP = GDP + ADP. Its function is as follows. Essential for recycling GMP and indirectly, cGMP. The chain is Guanylate kinase from Ehrlichia chaffeensis (strain ATCC CRL-10679 / Arkansas).